The primary structure comprises 166 residues: 3-isopropylmalate dehydratase small subunit 2 (166 aa).

The protein belongs to the LeuD family. LeuD type 2 subfamily. As to quaternary structure, heterodimer of LeuC and LeuD.

It carries out the reaction (2R,3S)-3-isopropylmalate = (2S)-2-isopropylmalate. Its pathway is amino-acid biosynthesis; L-leucine biosynthesis; L-leucine from 3-methyl-2-oxobutanoate: step 2/4. Its function is as follows. Catalyzes the isomerization between 2-isopropylmalate and 3-isopropylmalate, via the formation of 2-isopropylmaleate. The sequence is that of 3-isopropylmalate dehydratase small subunit 2 (leuD2) from Thermotoga maritima (strain ATCC 43589 / DSM 3109 / JCM 10099 / NBRC 100826 / MSB8).